An 846-amino-acid polypeptide reads, in one-letter code: Enhancer of polycomb-like protein 1 (846 aa).

Disordered regions lie at residues 169-204 (FNSKAEGSSGDVKSDKEQGRGMRVKGKDREKEKGDA), 391-466 (TSDE…APDA), 587-607 (EKKRPRSIDEVEEEMQEQSPK), 682-702 (AADAKPPPAPIFQKPPAPQPN), and 759-804 (QVQA…GVKQ). A compositionally biased stretch (basic and acidic residues) spans 180–203 (VKSDKEQGRGMRVKGKDREKEKGD). Polar residues predominate over residues 411–426 (PSLSGQTPLTSGQSSS). Positions 432-452 (TDKDREERAQRERYDAQRNAE) are enriched in basic and acidic residues. Residues 434–490 (KDREERAQRERYDAQRNAERSGILSGRSNAPDALKERLQALQQKTEEMLARKKEQDA) are a coiled coil. Residues 686–702 (KPPPAPIFQKPPAPQPN) are compositionally biased toward pro residues. Low complexity predominate over residues 759-773 (QVQAQGQGHPQAHLQ). The segment covering 783–796 (NGVNSPMPNGQQML) has biased composition (polar residues).

Belongs to the enhancer of polycomb family. In terms of assembly, component of the NuA4 histone acetyltransferase complex.

It is found in the nucleus. Functionally, component of the NuA4 histone acetyltransferase complex which is involved in transcriptional activation of selected genes principally by acetylation of nucleosomal histone H4 and H2A. The NuA4 complex is also involved in DNA repair. Involved in gene silencing by neighboring heterochromatin, blockage of the silencing spreading along the chromosome, and required for cell cycle progression through G2/M. This chain is Enhancer of polycomb-like protein 1 (EPL1), found in Cryptococcus neoformans var. neoformans serotype D (strain JEC21 / ATCC MYA-565) (Filobasidiella neoformans).